The primary structure comprises 621 residues: tRNA uridine 5-carboxymethylaminomethyl modification enzyme MnmG (621 aa).

Residue 8–13 (GAGHAG) coordinates FAD. 269–283 (GPRYCPSVEDKIFRF) provides a ligand contact to NAD(+).

Belongs to the MnmG family. As to quaternary structure, homodimer. Heterotetramer of two MnmE and two MnmG subunits. The cofactor is FAD.

Its subcellular location is the cytoplasm. In terms of biological role, NAD-binding protein involved in the addition of a carboxymethylaminomethyl (cmnm) group at the wobble position (U34) of certain tRNAs, forming tRNA-cmnm(5)s(2)U34. This chain is tRNA uridine 5-carboxymethylaminomethyl modification enzyme MnmG, found in Chlorobium phaeobacteroides (strain DSM 266 / SMG 266 / 2430).